The following is a 75-amino-acid chain: ATP synthase subunit c (75 aa).

The next 2 helical transmembrane spans lie at 9–29 (IGAG…GNIW) and 52–72 (IGFA…LILL).

It belongs to the ATPase C chain family. F-type ATPases have 2 components, F(1) - the catalytic core - and F(0) - the membrane proton channel. F(1) has five subunits: alpha(3), beta(3), gamma(1), delta(1), epsilon(1). F(0) has four main subunits: a(1), b(1), b'(1) and c(10-14). The alpha and beta chains form an alternating ring which encloses part of the gamma chain. F(1) is attached to F(0) by a central stalk formed by the gamma and epsilon chains, while a peripheral stalk is formed by the delta, b and b' chains.

It is found in the cell inner membrane. Its function is as follows. F(1)F(0) ATP synthase produces ATP from ADP in the presence of a proton or sodium gradient. F-type ATPases consist of two structural domains, F(1) containing the extramembraneous catalytic core and F(0) containing the membrane proton channel, linked together by a central stalk and a peripheral stalk. During catalysis, ATP synthesis in the catalytic domain of F(1) is coupled via a rotary mechanism of the central stalk subunits to proton translocation. Functionally, key component of the F(0) channel; it plays a direct role in translocation across the membrane. A homomeric c-ring of between 10-14 subunits forms the central stalk rotor element with the F(1) delta and epsilon subunits. The chain is ATP synthase subunit c from Rhodospirillum rubrum (strain ATCC 11170 / ATH 1.1.1 / DSM 467 / LMG 4362 / NCIMB 8255 / S1).